The primary structure comprises 261 residues: Putative quercetin 2,3-dioxygenase Ta0133 (261 aa).

Histidine 17, histidine 19, histidine 61, and glutamate 63 together coordinate a divalent metal cation.

It belongs to the pirin family. Requires a divalent metal cation as cofactor.

The catalysed reaction is quercetin + O2 = 2-(3,4-dihydroxybenzoyloxy)-4,6-dihydroxybenzoate + CO. Its pathway is flavonoid metabolism; quercetin degradation. Functionally, putative quercetin 2,3-dioxygenase. This Thermoplasma acidophilum (strain ATCC 25905 / DSM 1728 / JCM 9062 / NBRC 15155 / AMRC-C165) protein is Putative quercetin 2,3-dioxygenase Ta0133.